The following is a 313-amino-acid chain: Olfactory receptor 10K1 (313 aa).

Topologically, residues 1-25 are extracellular; that stretch reads MEQVNKTVVREFVVLGFSSLARLQQ. Asn-5 carries N-linked (GlcNAc...) asparagine glycosylation. A helical membrane pass occupies residues 26–46; that stretch reads LLFVIFLLLYLFTLGTNAIII. Residues 47 to 54 lie on the Cytoplasmic side of the membrane; the sequence is STIVLDRA. A helical transmembrane segment spans residues 55-75; sequence LHTPMYFFLAILSCSEICYTF. The Extracellular segment spans residues 76 to 99; the sequence is VIVPKMLVDLLSQKKTISFLGCAI. Residues 100-120 traverse the membrane as a helical segment; that stretch reads QMFSFLFFGSSHSFLLAAMGY. Topologically, residues 121–139 are cytoplasmic; sequence DRYMAICNPLRYSVLMGHG. The helical transmembrane segment at 140–160 threads the bilayer; sequence VCMGLMAAACACGFTVSLVTT. At 161 to 197 the chain is on the extracellular side; that stretch reads SLVFHLPFHSSNQLHHFFCDISPVLKLASQHSGFSQL. The helical transmembrane segment at 198–217 threads the bilayer; the sequence is VIFMLGVFALVIPLLLILVS. Topologically, residues 218–237 are cytoplasmic; sequence YIRIISAILKIPSSVGRYKT. Residues 238–258 traverse the membrane as a helical segment; that stretch reads FSTCASHLIVVTVHYSCASFI. Residues 259–271 are Extracellular-facing; it reads YLRPKTNYTSSQD. The N-linked (GlcNAc...) asparagine glycan is linked to Asn-265. The chain crosses the membrane as a helical span at residues 272 to 292; it reads TLISVSYTILTPLFNPMIYSL. At 293–313 the chain is on the cytoplasmic side; that stretch reads RNKEFKSALRRTIGQTFYPLS.

It belongs to the G-protein coupled receptor 1 family.

The protein resides in the cell membrane. In terms of biological role, odorant receptor. The protein is Olfactory receptor 10K1 (OR10K1) of Homo sapiens (Human).